Consider the following 238-residue polypeptide: Peptidyl-tRNA hydrolase (238 aa).

A tRNA-binding site is contributed by Y14. The active-site Proton acceptor is H19. Residues Y64, N66, and N112 each contribute to the tRNA site. A disordered region spans residues P202–P225. A compositionally biased stretch (polar residues) spans H207–Q216.

The protein belongs to the PTH family. In terms of assembly, monomer.

The protein localises to the cytoplasm. It catalyses the reaction an N-acyl-L-alpha-aminoacyl-tRNA + H2O = an N-acyl-L-amino acid + a tRNA + H(+). Its function is as follows. Hydrolyzes ribosome-free peptidyl-tRNAs (with 1 or more amino acids incorporated), which drop off the ribosome during protein synthesis, or as a result of ribosome stalling. Functionally, catalyzes the release of premature peptidyl moieties from peptidyl-tRNA molecules trapped in stalled 50S ribosomal subunits, and thus maintains levels of free tRNAs and 50S ribosomes. The chain is Peptidyl-tRNA hydrolase from Agrobacterium fabrum (strain C58 / ATCC 33970) (Agrobacterium tumefaciens (strain C58)).